The sequence spans 213 residues: dITP/XTP pyrophosphatase (213 aa).

17–22 lines the substrate pocket; that stretch reads SNNAGK. Residues glutamate 49 and aspartate 78 each coordinate Mg(2+). The active-site Proton acceptor is the aspartate 78. Substrate is bound by residues serine 79, 164-167, lysine 187, and 192-193; these read FGYD and HR.

The protein belongs to the HAM1 NTPase family. As to quaternary structure, homodimer. Mg(2+) is required as a cofactor.

The catalysed reaction is XTP + H2O = XMP + diphosphate + H(+). It catalyses the reaction dITP + H2O = dIMP + diphosphate + H(+). It carries out the reaction ITP + H2O = IMP + diphosphate + H(+). Its function is as follows. Pyrophosphatase that catalyzes the hydrolysis of nucleoside triphosphates to their monophosphate derivatives, with a high preference for the non-canonical purine nucleotides XTP (xanthosine triphosphate), dITP (deoxyinosine triphosphate) and ITP. Seems to function as a house-cleaning enzyme that removes non-canonical purine nucleotides from the nucleotide pool, thus preventing their incorporation into DNA/RNA and avoiding chromosomal lesions. This Bordetella bronchiseptica (strain ATCC BAA-588 / NCTC 13252 / RB50) (Alcaligenes bronchisepticus) protein is dITP/XTP pyrophosphatase.